Reading from the N-terminus, the 124-residue chain is uncharacterized protein (124 aa).

This is an uncharacterized protein from Saccharomyces cerevisiae (strain ATCC 204508 / S288c) (Baker's yeast).